A 403-amino-acid polypeptide reads, in one-letter code: Protein STRICTOSIDINE SYNTHASE-LIKE 13 (403 aa).

Residues 1-42 (MEKKGQHGTYESMMTHHPILCIIALSVLFIAIDPFHMSPIGG) form the signal peptide. N-linked (GlcNAc...) asparagine glycosylation is found at Asn66 and Asn206.

The protein belongs to the strictosidine synthase family.

It is found in the vacuole. In terms of biological role, required for the exine formation during pollen development. In Arabidopsis thaliana (Mouse-ear cress), this protein is Protein STRICTOSIDINE SYNTHASE-LIKE 13.